A 138-amino-acid polypeptide reads, in one-letter code: Large ribosomal subunit protein uL16c (138 aa).

The protein belongs to the universal ribosomal protein uL16 family. As to quaternary structure, part of the 50S ribosomal subunit.

It localises to the plastid. Its subcellular location is the chloroplast. This chain is Large ribosomal subunit protein uL16c, found in Emiliania huxleyi (Coccolithophore).